A 131-amino-acid chain; its full sequence is Lysozyme C (131 aa).

The 130-residue stretch at 2 to 131 folds into the C-type lysozyme domain; the sequence is KIYEQCELAR…VSQWIKGCKL (130 aa). Cystine bridges form between cysteine 7–cysteine 129, cysteine 31–cysteine 117, cysteine 66–cysteine 82, and cysteine 78–cysteine 96. Residues glutamate 36 and aspartate 54 contribute to the active site.

Belongs to the glycosyl hydrolase 22 family. As to quaternary structure, monomer.

It is found in the secreted. It catalyses the reaction Hydrolysis of (1-&gt;4)-beta-linkages between N-acetylmuramic acid and N-acetyl-D-glucosamine residues in a peptidoglycan and between N-acetyl-D-glucosamine residues in chitodextrins.. In terms of biological role, lysozymes have primarily a bacteriolytic function; those in tissues and body fluids are associated with the monocyte-macrophage system and enhance the activity of immunoagents. Has strong bacteriolytic activity against M.luteus and V.cholerae, weak bacteriolytic activity against P.aeruginosa and no activity against A.hydrophila. This is Lysozyme C (LYZ) from Pelodiscus sinensis (Chinese softshell turtle).